We begin with the raw amino-acid sequence, 351 residues long: Nicotinate-nucleotide--dimethylbenzimidazole phosphoribosyltransferase (351 aa).

Catalysis depends on glutamate 317, which acts as the Proton acceptor.

The protein belongs to the CobT family.

The enzyme catalyses 5,6-dimethylbenzimidazole + nicotinate beta-D-ribonucleotide = alpha-ribazole 5'-phosphate + nicotinate + H(+). The protein operates within nucleoside biosynthesis; alpha-ribazole biosynthesis; alpha-ribazole from 5,6-dimethylbenzimidazole: step 1/2. In terms of biological role, catalyzes the synthesis of alpha-ribazole-5'-phosphate from nicotinate mononucleotide (NAMN) and 5,6-dimethylbenzimidazole (DMB). The protein is Nicotinate-nucleotide--dimethylbenzimidazole phosphoribosyltransferase of Pseudomonas fluorescens (strain ATCC BAA-477 / NRRL B-23932 / Pf-5).